The chain runs to 494 residues: UDP-N-acetylmuramate--L-alanine ligase (494 aa).

134 to 140 (GSHGKTT) is an ATP binding site.

This sequence belongs to the MurCDEF family.

It is found in the cytoplasm. It carries out the reaction UDP-N-acetyl-alpha-D-muramate + L-alanine + ATP = UDP-N-acetyl-alpha-D-muramoyl-L-alanine + ADP + phosphate + H(+). Its pathway is cell wall biogenesis; peptidoglycan biosynthesis. In terms of biological role, cell wall formation. This is UDP-N-acetylmuramate--L-alanine ligase from Prochlorococcus marinus (strain NATL1A).